A 372-amino-acid polypeptide reads, in one-letter code: Lipoyl synthase, mitochondrial (372 aa).

Residues 1–27 (MSLRCGDAARTLGPRVFGRYFCSPVRP) constitute a mitochondrion transit peptide. 7 residues coordinate [4Fe-4S] cluster: Cys-106, Cys-111, Cys-117, Cys-137, Cys-141, Cys-144, and Ser-352. Positions 122–341 (EYATATATIM…EKVGNELGFH (220 aa)) constitute a Radical SAM core domain.

Belongs to the radical SAM superfamily. Lipoyl synthase family. [4Fe-4S] cluster serves as cofactor.

It localises to the mitochondrion. The enzyme catalyses [[Fe-S] cluster scaffold protein carrying a second [4Fe-4S](2+) cluster] + N(6)-octanoyl-L-lysyl-[protein] + 2 oxidized [2Fe-2S]-[ferredoxin] + 2 S-adenosyl-L-methionine + 4 H(+) = [[Fe-S] cluster scaffold protein] + N(6)-[(R)-dihydrolipoyl]-L-lysyl-[protein] + 4 Fe(3+) + 2 hydrogen sulfide + 2 5'-deoxyadenosine + 2 L-methionine + 2 reduced [2Fe-2S]-[ferredoxin]. It functions in the pathway protein modification; protein lipoylation via endogenous pathway; protein N(6)-(lipoyl)lysine from octanoyl-[acyl-carrier-protein]: step 2/2. Catalyzes the radical-mediated insertion of two sulfur atoms into the C-6 and C-8 positions of the octanoyl moiety bound to the lipoyl domains of lipoate-dependent enzymes, thereby converting the octanoylated domains into lipoylated derivatives. The protein is Lipoyl synthase, mitochondrial of Homo sapiens (Human).